The sequence spans 147 residues: Hemoglobin subunit beta-1 (147 aa).

Position 2 is an N-acetylvaline (valine 2). One can recognise a Globin domain in the interval histidine 3–histidine 147. Residue lysine 18 is modified to N6-succinyllysine. A Phosphoserine modification is found at serine 45. Lysine 60 is subject to N6-succinyllysine. Heme b-binding residues include histidine 64 and histidine 93. Residue arginine 105 is modified to Asymmetric dimethylarginine. Phosphothreonine is present on threonine 124.

It belongs to the globin family. In terms of assembly, hb1 is a heterotetramer of two alpha chains and two beta-1 chains. Red blood cells.

Involved in oxygen transport from the lung to the various peripheral tissues. The chain is Hemoglobin subunit beta-1 (HBB1) from Chalinolobus morio (Chocolate-wattled bat).